Consider the following 1446-residue polypeptide: ABC-type transporter oblD (1446 aa).

5 N-linked (GlcNAc...) asparagine glycosylation sites follow: Asn9, Asn28, Asn222, Asn281, and Asn305. Residues 104-357 (LEVLSLVSKA…FLDMGFVCPD (254 aa)) form the ABC transporter 1 domain. Transmembrane regions (helical) follow at residues 468–488 (VTISSVFGNTIISLVIASIFY), 502–522 (ALLFFAVLMNALGCGLEMLTL), 548–568 (MIMDLPYKIINAITSNIVLYF), 577–597 (GAFFFFVFTSFVLTLTMSMFF), 610–630 (ALPFSAVLLLGLSMYTGFTIP), and 719–739 (IGVIFAYMFLLAAVYLVATDF). In terms of domain architecture, ABC transporter 2 spans 796 to 1038 (FQWKDVCFDI…ILIDYFVRNG (243 aa)). 832 to 839 (GVSGAGKT) serves as a coordination point for ATP. Helical transmembrane passes span 1147–1167 (ALCVLSALFVGFSLFHTPNTI), 1177–1197 (IFMLLTVFGQLIQQIMPHFVA), 1217–1237 (FIISNIVVELPWNSLMSVLMF), 1265–1285 (LMVWTFLLFSSTFAHFMIAAF), and 1301–1321 (LCLIFCGVLATPGQLPGFWIF). N-linked (GlcNAc...) asparagine glycans are attached at residues Asn1344 and Asn1359. A helical transmembrane segment spans residues 1412 to 1432 (FGLMWVFIVFNIFAACLLYWW).

This sequence belongs to the ABC transporter superfamily. ABCG family. PDR (TC 3.A.1.205) subfamily.

It localises to the cell membrane. Its function is as follows. ABC-type transporter; part of the gene cluster that mediates the biosynthesis of the sesterterpenes ophiobolins, fungal phytotoxins with potential anti-cancer activities. Acts as a specific transporter involved in ophiobolins secretion. This Aspergillus clavatus (strain ATCC 1007 / CBS 513.65 / DSM 816 / NCTC 3887 / NRRL 1 / QM 1276 / 107) protein is ABC-type transporter oblD.